A 718-amino-acid polypeptide reads, in one-letter code: Sodium/myo-inositol cotransporter (718 aa).

At 1-9 (MRAVLEAAD) the chain is on the extracellular side. Residues 10–29 (IAVVALYFILVMCIGFFAMW) form a helical membrane-spanning segment. Over 30–38 (KSNRSTVSG) the chain is Cytoplasmic. Residues 39–57 (YFLAGRSMTWVAIGASLFV) traverse the membrane as a helical segment. Residues 58-86 (SNIGSEHFIGLAGSGAASGFAVGAWEFNA) are Extracellular-facing. The chain crosses the membrane as a helical span at residues 87 to 110 (LLLLQLLGWVFIPIYIRSGVYTMP). The Cytoplasmic portion of the chain corresponds to 111 to 123 (EYLSKRFGGHRIQ). A helical membrane pass occupies residues 124-144 (VYFAALSLLLYIFTKLSVDLY). Residues 145 to 157 (SGALFIQESLGWN) are Extracellular-facing. A helical transmembrane segment spans residues 158–183 (LYVSVILLIGMTALLTVTGGLVAVIY). The Cytoplasmic portion of the chain corresponds to 184–186 (TDT). Residues 187 to 205 (LQALLMIIGALTLMVISMV) traverse the membrane as a helical segment. Residues 206–303 (KIGGFEEVKR…HAKGSTLMAG (98 aa)) lie on the Extracellular side of the membrane. A glycan (N-linked (GlcNAc...) asparagine) is linked at Asn-232. A helical membrane pass occupies residues 304–324 (FLKLLPMFIIVVPGMISRIVF). The Cytoplasmic portion of the chain corresponds to 325–353 (ADEIACINPEHCMQVCGSRAGCSNIAYPR). A helical membrane pass occupies residues 354 to 376 (LVMTLVPVGLRGLMMAVMIAALM). Residues 377–406 (SDLDSIFNSASTIFTLDVYKLIRKSASSRE) are Extracellular-facing. The chain crosses the membrane as a helical span at residues 407–430 (LMIVGRIFVAFMVVISIAWVPIIV). Over 431–443 (EMQGGQMYLYIQE) the chain is Cytoplasmic. A helical membrane pass occupies residues 444–462 (VADYLTPPVAALFLLAIFW). Topologically, residues 463–510 (KRCNEQGAFYGGMAGFVLGAVRLILAFTYRAPECDQPDNRPGFIKDIH) are extracellular. Residues 511–532 (YMYVATALFWITGLITVIVSLL) form a helical membrane-spanning segment. Over 533–695 (TPPPTKDQIR…QMLEETPQVK (163 aa)) the chain is Cytoplasmic. Phosphoserine is present on residues Ser-594 and Ser-632. A helical membrane pass occupies residues 696–716 (VILNIGLFAVCSLGIFMFVYF). Residues 717 to 718 (SL) are Extracellular-facing.

Belongs to the sodium:solute symporter (SSF) (TC 2.A.21) family. Interacts with KCNQ2 (via the pore module). Interacts with KCNQ1; this interaction is direct. Forms coregulatory complexes with ion channels KCNQ2-KCNQ3 and KCNQ1-KCNE2. Highly expressed in kidney, placenta, and brain and at a lesser extent in thymus, lung, bladder, and testes. Expressed in the choroid plexus epithelium (at protein level).

Its subcellular location is the apical cell membrane. The protein localises to the basolateral cell membrane. The enzyme catalyses myo-inositol(out) + 2 Na(+)(out) = myo-inositol(in) + 2 Na(+)(in). It carries out the reaction scyllo-inositol(out) + 2 Na(+)(out) = scyllo-inositol(in) + 2 Na(+)(in). Its function is as follows. Electrogenic Na(+)-coupled sugar symporter that actively transports myo-inositol and its stereoisomer scyllo-inositol across the plasma membrane, with a Na(+) to sugar coupling ratio of 2:1. Maintains myo-inositol concentration gradient that defines cell volume and fluid balance during osmotic stress, in particular in the fetoplacental unit and central nervous system. Forms coregulatory complexes with voltage-gated K(+) ion channels, allosterically altering ion selectivity, voltage dependence and gating kinetics of the channel. In turn, K(+) efflux through the channel forms a local electrical gradient that modulates electrogenic Na(+)-coupled myo-inositol influx through the transporter. Associates with KCNQ1-KCNE2 channel in the apical membrane of choroid plexus epithelium and regulates the myo-inositol gradient between blood and cerebrospinal fluid with an impact on neuron excitability. Associates with KCNQ2-KCNQ3 channel altering ion selectivity, increasing Na(+) and Cs(+) permeation relative to K(+) permeation. Provides myo-inositol precursor for biosynthesis of phosphoinositides such as PI(4,5)P2, thus indirectly affecting the activity of phosphoinositide-dependent ion channels and Ca(2+) signaling upon osmotic stress. (Microbial infection) Functions as a retroviral receptor for M813 murine leukemia virus (MuLV) entry. In Mus musculus (Mouse), this protein is Sodium/myo-inositol cotransporter (Slc5a3).